We begin with the raw amino-acid sequence, 132 residues long: Translation initiation factor 5A (132 aa).

A Hypusine modification is found at lysine 36.

This sequence belongs to the eIF-5A family.

It localises to the cytoplasm. In terms of biological role, functions by promoting the formation of the first peptide bond. The polypeptide is Translation initiation factor 5A (eIF5A) (Pyrobaculum arsenaticum (strain DSM 13514 / JCM 11321 / PZ6)).